The following is a 313-amino-acid chain: Homeobox protein knotted-1-like 2 (313 aa).

Residues 13-40 are disordered; the sequence is DPSSAAASSPNPSFSPGGGGGGGVGGGE. The span at 14–27 shows a compositional bias: low complexity; the sequence is PSSAAASSPNPSFS. Residues 28–38 are compositionally biased toward gly residues; it reads PGGGGGGGVGG. In terms of domain architecture, ELK spans 205-225; that stretch reads ELKNELKQGYKEKLVDIREEI. The segment at residues 226 to 289 is a DNA-binding region (homeobox; TALE-type); that stretch reads LRKRRAGKLP…NQRKRNWHSN (64 aa). The tract at residues 282–313 is disordered; that stretch reads RKRNWHSNPASSGEKTKKKRNVTGDGGAEQSW.

This sequence belongs to the TALE/KNOX homeobox family. As to expression, isoform 1 is expressed in roots, leaf blades, leaf sheaths and flowers. Isoform 2 is expressed in leaf blades, leaf sheaths and flowers.

The protein localises to the nucleus. The protein is Homeobox protein knotted-1-like 2 (HOS58) of Oryza sativa subsp. japonica (Rice).